A 217-amino-acid polypeptide reads, in one-letter code: NADH-quinone oxidoreductase subunit I (217 aa).

The interval 22–41 (TTEQYPEEKKETAPRFHGRH) is disordered. 4Fe-4S ferredoxin-type domains lie at 43–73 (LNRH…VEGA) and 89–118 (RVYQ…MSND). 8 residues coordinate [4Fe-4S] cluster: cysteine 53, cysteine 56, cysteine 59, cysteine 63, cysteine 98, cysteine 101, cysteine 104, and cysteine 108. The interval 193–217 (ARRTAGEHSRADEVPAHGAGSERPR) is disordered.

It belongs to the complex I 23 kDa subunit family. NDH-1 is composed of 14 different subunits. Subunits NuoA, H, J, K, L, M, N constitute the membrane sector of the complex. The cofactor is [4Fe-4S] cluster.

It is found in the cell membrane. The enzyme catalyses a quinone + NADH + 5 H(+)(in) = a quinol + NAD(+) + 4 H(+)(out). Its function is as follows. NDH-1 shuttles electrons from NADH, via FMN and iron-sulfur (Fe-S) centers, to quinones in the respiratory chain. The immediate electron acceptor for the enzyme in this species is believed to be ubiquinone. Couples the redox reaction to proton translocation (for every two electrons transferred, four hydrogen ions are translocated across the cytoplasmic membrane), and thus conserves the redox energy in a proton gradient. This chain is NADH-quinone oxidoreductase subunit I, found in Frankia casuarinae (strain DSM 45818 / CECT 9043 / HFP020203 / CcI3).